The chain runs to 988 residues: Putative disease resistance protein RGA4 (988 aa).

Residues 137–439 (AAAATRETGF…MAHGFLLSKG (303 aa)) enclose the NB-ARC domain. Residue 184–191 (GMGGLGKT) participates in ATP binding. LRR repeat units lie at residues 526–548 (FVSL…SIGD), 549–572 (LLHL…LCKL), 574–595 (NLQT…QTSK), 596–620 (LSSL…GLLT), 638–662 (LGEL…KNDT), 674–696 (LQSL…EVKV), 751–776 (LPCL…DVHS), 784–808 (FPSL…EGEE), 829–851 (LSSV…SISN), 852–876 (LSTL…MFTS), 878–900 (TNLE…SLTS), 901–925 (LNAL…GLEG), 927–950 (TSLT…LQHL), and 966–988 (KRCD…LDIH).

This sequence belongs to the disease resistance NB-LRR family.

Functionally, disease resistance protein. Resistance proteins guard the plant against pathogens that contain an appropriate avirulence protein via a direct or indirect interaction with this avirulence protein. That triggers a defense system which restricts the pathogen growth. The sequence is that of Putative disease resistance protein RGA4 (RGA4) from Solanum bulbocastanum (Wild potato).